We begin with the raw amino-acid sequence, 344 residues long: Tripartite motif-containing protein 44 (344 aa).

Disordered regions lie at residues 1–25 (MASGVGAAFEELPHDGTCDECEPDE) and 66–165 (AWTP…EFDP). Basic and acidic residues predominate over residues 75-92 (GAGKEEAEVKVEQEREIE). Residues 93–165 (SEAGEESESE…ETEAESEFDP (73 aa)) are compositionally biased toward acidic residues. A B box-type zinc finger spans residues 174–215 (VAKRKCPDHGLDLSTYCQEDRQLICVLCPVIGAHQGHQLSTL). Zn(2+)-binding residues include Cys-179, His-182, Cys-201, and His-207. Residues 290–325 (AHVTEILADIQSHMDRLMTQMAQAKEQLDTSNESAE) adopt a coiled-coil conformation. The disordered stretch occupies residues 309–344 (QMAQAKEQLDTSNESAEPKAEGDEEGPSGASEEEDT). Over residues 330–344 (GDEEGPSGASEEEDT) the composition is skewed to acidic residues. Phosphoserine is present on residues Ser-336 and Ser-339.

As to quaternary structure, interacts (via coiled coil) with TRIM17 (via coiled coil). Highly expressed in testis.

May play a role in the process of differentiation and maturation of neuronal cells. May regulate the activity of TRIM17. Is a negative regulator of PAX6 expression. The protein is Tripartite motif-containing protein 44 (TRIM44) of Homo sapiens (Human).